The following is a 1615-amino-acid chain: Replicase large subunit (1615 aa).

The Alphavirus-like MT domain occupies 72–281 (TFYNTQNAVH…HSYSNILKYV (210 aa)). Residues 801–963 (MVYSDMAKLR…KIEVDEVETR (163 aa)) form the (+)RNA virus helicase ATP-binding domain. 833–840 (GVPGCGKT) is an a ribonucleoside 5'-triphosphate binding site. The region spanning 964–1116 (RTTLRCPADI…DMYKVDAGTQ (153 aa)) is the (+)RNA virus helicase C-terminal domain. The RdRp catalytic domain maps to 1380–1493 (MDILELDISK…YFPKGCEFPD (114 aa)).

Belongs to the ssRNA positive-strand viruses RNA-directed RNA polymerase family. As to quaternary structure, heterodimer of a large and a small subunit.

It carries out the reaction RNA(n) + a ribonucleoside 5'-triphosphate = RNA(n+1) + diphosphate. It catalyses the reaction ATP + H2O = ADP + phosphate + H(+). Functionally, is an RNA-dependent RNA polymerase active in viral RNA replication. Its function is as follows. Is a methyltransferase active in RNA capping and an RNA helicase. Methyltransferase displays a cytoplasmic capping enzyme activity. This function is necessary since all viral RNAs are synthesized in the cytoplasm, and host capping enzymes are restricted to the nucleus. Helicase region probably exhibits NTPase and RNA unwinding activities. It also acts as a suppressor of RNA-mediated gene silencing, also known as post-transcriptional gene silencing (PTGS), a mechanism of plant viral defense that limits the accumulation of viral RNAs. May mediate silencing suppression through either inhibition of HEN1-mediated siRNA or siRNA demethylation. This Solanum lycopersicum (Tomato) protein is Replicase large subunit.